The sequence spans 166 residues: NADH-quinone oxidoreductase subunit I (166 aa).

2 4Fe-4S ferredoxin-type domains span residues 57–87 (LRRY…IESE) and 97–126 (TRYD…VTPI). [4Fe-4S] cluster contacts are provided by cysteine 67, cysteine 70, cysteine 73, cysteine 77, cysteine 106, cysteine 109, cysteine 112, and cysteine 116.

The protein belongs to the complex I 23 kDa subunit family. NDH-1 is composed of 14 different subunits. Subunits NuoA, H, J, K, L, M, N constitute the membrane sector of the complex. The cofactor is [4Fe-4S] cluster.

It is found in the cell inner membrane. The catalysed reaction is a quinone + NADH + 5 H(+)(in) = a quinol + NAD(+) + 4 H(+)(out). Functionally, NDH-1 shuttles electrons from NADH, via FMN and iron-sulfur (Fe-S) centers, to quinones in the respiratory chain. The immediate electron acceptor for the enzyme in this species is believed to be ubiquinone. Couples the redox reaction to proton translocation (for every two electrons transferred, four hydrogen ions are translocated across the cytoplasmic membrane), and thus conserves the redox energy in a proton gradient. This chain is NADH-quinone oxidoreductase subunit I, found in Legionella pneumophila (strain Paris).